A 349-amino-acid chain; its full sequence is Protein RecA (349 aa).

Position 69–76 (69–76) interacts with ATP; that stretch reads GPESSGKT.

This sequence belongs to the RecA family.

Its subcellular location is the cytoplasm. In terms of biological role, can catalyze the hydrolysis of ATP in the presence of single-stranded DNA, the ATP-dependent uptake of single-stranded DNA by duplex DNA, and the ATP-dependent hybridization of homologous single-stranded DNAs. It interacts with LexA causing its activation and leading to its autocatalytic cleavage. This chain is Protein RecA, found in Rippkaea orientalis (strain PCC 8801 / RF-1) (Cyanothece sp. (strain PCC 8801)).